Consider the following 319-residue polypeptide: Protein-methionine methyltransferase laeA (319 aa).

The disordered stretch occupies residues 269–293 (REPQSGTCSVQRENGANGDRSTLSA). Residues 270-293 (EPQSGTCSVQRENGANGDRSTLSA) show a composition bias toward polar residues.

It belongs to the methyltransferase superfamily. LaeA methyltransferase family. As to quaternary structure, component of the heterotrimeric velvet complex composed of laeA, veA and velB; VeA acting as a bridging protein between laeA and velB.

It is found in the nucleus. The enzyme catalyses L-methionyl-[protein] + S-adenosyl-L-methionine = S-methyl-L-methionyl-[protein] + S-adenosyl-L-homocysteine. Functionally, methyltransferase; component of the velvet transcription factor complex that acts as a global regulator for secondary metabolite gene expression. Controls the expression of the chaetoglobosin A biosynthesis cluster via the cheR transcription factor and the subsequent production of chaetoglobosin A. Positively regulates the expression of smtA and negatively regulates the expression of velB. LaeA also regulates pigmentation and spores production. In Chaetomium globosum (strain ATCC 6205 / CBS 148.51 / DSM 1962 / NBRC 6347 / NRRL 1970) (Soil fungus), this protein is Protein-methionine methyltransferase laeA.